Here is a 236-residue protein sequence, read N- to C-terminus: Exosome complex component Rrp4 (236 aa).

The region spanning 64 to 133 (GDKVIGKVIE…EIKESWLTLK (70 aa)) is the S1 motif domain. The KH domain occupies 141–199 (EGGHMVLIHASRVPRVIGKGGGMVNMVKELTATRIIIGQNGLIWIDGPIEGVTMAIAAI).

Belongs to the RRP4 family. Component of the archaeal exosome complex. Forms a trimer of Rrp4 and/or Csl4 subunits. The trimer associates with a hexameric ring-like arrangement composed of 3 Rrp41-Rrp42 heterodimers.

The protein resides in the cytoplasm. In terms of biological role, non-catalytic component of the exosome, which is a complex involved in RNA degradation. Increases the RNA binding and the efficiency of RNA degradation. Confers strong poly(A) specificity to the exosome. This is Exosome complex component Rrp4 from Thermoplasma acidophilum (strain ATCC 25905 / DSM 1728 / JCM 9062 / NBRC 15155 / AMRC-C165).